A 239-amino-acid chain; its full sequence is Probable transcriptional regulatory protein ACL_0044 (239 aa).

Belongs to the TACO1 family.

The protein resides in the cytoplasm. This is Probable transcriptional regulatory protein ACL_0044 from Acholeplasma laidlawii (strain PG-8A).